The primary structure comprises 397 residues: MIFKAAGSGAEDRPWRPWDADGLPLRDSLRGLSPYGAPQLDVPVRLNTNENPHPPSVGLVDAIGKAAALAATEANRYPDRDAEALRADLAYYLTPDAGFGVHTSQVWAANGSNEILQQLLQAFGGPGRVALGFEPSYSMHRLIALATATEWVAGQRAEDFTLSPAVVTDAIARHRPALVFLCSPNNPTGTALPPEVVAAACEAVEATGSGMVVVDEAYAEFRRAGVPSTLTLLPRHPRLVVTRTMSKAFALAGARVGYLAAHPAVVDSLYLVRLPYHLSSFTQAVARTALAHADELLGTVEAVKAQRDRIVRELPALGLRLAPSDANFVFFGRFADQRAVWQSLLDAGVLVRDVGLTGWLRVTAGLPNEVDAFLGALGRTLTGSVIGADGVISLATA.

Lysine 247 carries the post-translational modification N6-(pyridoxal phosphate)lysine.

It belongs to the class-II pyridoxal-phosphate-dependent aminotransferase family. Histidinol-phosphate aminotransferase subfamily. Homodimer. It depends on pyridoxal 5'-phosphate as a cofactor.

It catalyses the reaction L-histidinol phosphate + 2-oxoglutarate = 3-(imidazol-4-yl)-2-oxopropyl phosphate + L-glutamate. It functions in the pathway amino-acid biosynthesis; L-histidine biosynthesis; L-histidine from 5-phospho-alpha-D-ribose 1-diphosphate: step 7/9. In Frankia casuarinae (strain DSM 45818 / CECT 9043 / HFP020203 / CcI3), this protein is Histidinol-phosphate aminotransferase.